The chain runs to 673 residues: Estrogen receptor beta (673 aa).

The tract at residues 1-181 is modulating; sequence MASSPGLDPH…SAVGKADMHF (181 aa). NR C4-type zinc fingers lie at residues 182–202 and 218–242; these read CAVC…CEGC and CPAT…LRKC. Residues 182–247 constitute a DNA-binding region (nuclear receptor); it reads CAVCHDYASG…RLRKCYEVGM (66 aa). One can recognise an NR LBD domain in the interval 316–552; the sequence is SPEEFISRIM…DLLLEMLDAN (237 aa). Residues 553-602 are disordered; it reads TSSGGSQPSSSPSSETYSDQHQYPQPPSHLHPGSEQTTADHAIVPPLGPT. The span at 554 to 566 shows a compositional bias: low complexity; the sequence is SSGGSQPSSSPSS.

This sequence belongs to the nuclear hormone receptor family. NR3 subfamily. Binds DNA as a homodimer. Can form a heterodimer with ER-alpha. As to expression, abundant in the liver and testes, less abundant in the ovary and barely detectable in the muscle.

It localises to the nucleus. Binds estrogens with an affinity similar to that of ER-alpha, and activates expression of reporter genes containing estrogen response elements (ERE) in an estrogen-dependent manner. In Micropogonias undulatus (Atlantic croaker), this protein is Estrogen receptor beta (esr2).